We begin with the raw amino-acid sequence, 272 residues long: HMP-PP phosphatase (272 aa).

Asp-8 functions as the Nucleophile in the catalytic mechanism. Mg(2+) is bound by residues Asp-8, Asp-10, and Asp-212.

This sequence belongs to the HAD-like hydrolase superfamily. Cof family. The cofactor is Mg(2+).

It catalyses the reaction 4-amino-2-methyl-5-(diphosphooxymethyl)pyrimidine + H2O = 4-amino-2-methyl-5-(phosphooxymethyl)pyrimidine + phosphate + H(+). Its function is as follows. Catalyzes the hydrolysis of 4-amino-2-methyl-5-hydroxymethylpyrimidine pyrophosphate (HMP-PP) to 4-amino-2-methyl-5-hydroxymethylpyrimidine phosphate (HMP-P). The protein is HMP-PP phosphatase of Escherichia coli (strain UTI89 / UPEC).